Consider the following 270-residue polypeptide: Phosphoribosylformylglycinamidine synthase subunit PurQ (270 aa).

The Glutamine amidotransferase type-1 domain maps to 5–251; it reads ALVLHATGTN…VIRERDSEEE (247 aa). The active-site Nucleophile is C95. Catalysis depends on residues H236 and E238.

As to quaternary structure, part of the FGAM synthase complex composed of 1 PurL, 1 PurQ and 2 PurS subunits.

Its subcellular location is the cytoplasm. It catalyses the reaction N(2)-formyl-N(1)-(5-phospho-beta-D-ribosyl)glycinamide + L-glutamine + ATP + H2O = 2-formamido-N(1)-(5-O-phospho-beta-D-ribosyl)acetamidine + L-glutamate + ADP + phosphate + H(+). It carries out the reaction L-glutamine + H2O = L-glutamate + NH4(+). It participates in purine metabolism; IMP biosynthesis via de novo pathway; 5-amino-1-(5-phospho-D-ribosyl)imidazole from N(2)-formyl-N(1)-(5-phospho-D-ribosyl)glycinamide: step 1/2. Part of the phosphoribosylformylglycinamidine synthase complex involved in the purines biosynthetic pathway. Catalyzes the ATP-dependent conversion of formylglycinamide ribonucleotide (FGAR) and glutamine to yield formylglycinamidine ribonucleotide (FGAM) and glutamate. The FGAM synthase complex is composed of three subunits. PurQ produces an ammonia molecule by converting glutamine to glutamate. PurL transfers the ammonia molecule to FGAR to form FGAM in an ATP-dependent manner. PurS interacts with PurQ and PurL and is thought to assist in the transfer of the ammonia molecule from PurQ to PurL. This chain is Phosphoribosylformylglycinamidine synthase subunit PurQ, found in Treponema denticola (strain ATCC 35405 / DSM 14222 / CIP 103919 / JCM 8153 / KCTC 15104).